A 671-amino-acid polypeptide reads, in one-letter code: UvrABC system protein B (671 aa).

Residues glutamate 25–arginine 412 form the Helicase ATP-binding domain. Glycine 38–threonine 45 contributes to the ATP binding site. A Beta-hairpin motif is present at residues tyrosine 91–isoleucine 114. In terms of domain architecture, Helicase C-terminal spans glutamine 429–isoleucine 582. The region spanning threonine 632–arginine 667 is the UVR domain.

It belongs to the UvrB family. Forms a heterotetramer with UvrA during the search for lesions. Interacts with UvrC in an incision complex.

Its subcellular location is the cytoplasm. In terms of biological role, the UvrABC repair system catalyzes the recognition and processing of DNA lesions. A damage recognition complex composed of 2 UvrA and 2 UvrB subunits scans DNA for abnormalities. Upon binding of the UvrA(2)B(2) complex to a putative damaged site, the DNA wraps around one UvrB monomer. DNA wrap is dependent on ATP binding by UvrB and probably causes local melting of the DNA helix, facilitating insertion of UvrB beta-hairpin between the DNA strands. Then UvrB probes one DNA strand for the presence of a lesion. If a lesion is found the UvrA subunits dissociate and the UvrB-DNA preincision complex is formed. This complex is subsequently bound by UvrC and the second UvrB is released. If no lesion is found, the DNA wraps around the other UvrB subunit that will check the other stand for damage. The sequence is that of UvrABC system protein B from Pseudomonas putida (strain ATCC 47054 / DSM 6125 / CFBP 8728 / NCIMB 11950 / KT2440).